Reading from the N-terminus, the 1063-residue chain is Mediator of RNA polymerase II transcription subunit 15 (1063 aa).

Residues 149 to 175 (LQQSQIQQQRQQQQQQSQQPQQTQQPQ) are compositionally biased toward low complexity. Disordered regions lie at residues 149 to 194 (LQQS…SGSV), 286 to 342 (QQQQ…NATN), 422 to 482 (SQNA…QPIN), 500 to 544 (NKAR…AFTK), and 728 to 789 (TASI…SVGN). Composition is skewed to polar residues over residues 176–192 (ASSP…QRSG) and 301–310 (PQGNVGAQSL). Residues 311 to 342 (QSMSPQDQPSTQQQQPQRTAAPPNNPNVNATN) are compositionally biased toward low complexity. Polar residues predominate over residues 422–442 (SQNAPNTNKLGNPQPDNTGNP). Residues 443–460 (QAFSQQAFAQQQQQQQQQ) show a composition bias toward low complexity. Polar residues-rich tracts occupy residues 461–482 (LHRT…QPIN) and 500–527 (NKAR…PNLD). Composition is skewed to low complexity over residues 528-542 (TSST…PSAF) and 733-758 (QQQQ…SVSS). Residues 766–776 (SIPNAQPSVPG) are compositionally biased toward polar residues. S948 carries the phosphoserine modification.

It belongs to the Mediator complex subunit 15 family. Component of the Mediator complex. Component of a med15-hrp1 subcomplex, which flexibly associates with the other Mediator components.

Its subcellular location is the nucleus. Its function is as follows. Component of the Mediator complex, a coactivator involved in the regulated transcription of nearly all RNA polymerase II-dependent genes. Mediator functions as a bridge to convey information from gene-specific regulatory proteins to the basal RNA polymerase II transcription machinery. Mediator is recruited to promoters by direct interactions with regulatory proteins and serves as a scaffold for the assembly of a functional preinitiation complex with RNA polymerase II and the general transcription factors. Component of a med15-hrp1 subcomplex, linking the Mediator complex to the chromatin-remodeling activity of hrp1 at a distinct subset of hrp1-bound gene promoters. This chain is Mediator of RNA polymerase II transcription subunit 15 (med15), found in Schizosaccharomyces pombe (strain 972 / ATCC 24843) (Fission yeast).